The sequence spans 227 residues: PKHD-type hydroxylase Neut_0373 (227 aa).

Positions 78–179 (KIMPPFFNRY…RIACFMFIQS (102 aa)) constitute a Fe2OG dioxygenase domain. Fe cation is bound by residues H97, D99, and H160. R170 lines the 2-oxoglutarate pocket.

It depends on Fe(2+) as a cofactor. L-ascorbate serves as cofactor.

This chain is PKHD-type hydroxylase Neut_0373, found in Nitrosomonas eutropha (strain DSM 101675 / C91 / Nm57).